We begin with the raw amino-acid sequence, 122 residues long: Large ribosomal subunit protein bL12 (122 aa).

This sequence belongs to the bacterial ribosomal protein bL12 family. In terms of assembly, homodimer. Part of the ribosomal stalk of the 50S ribosomal subunit. Forms a multimeric L10(L12)X complex, where L10 forms an elongated spine to which 2 to 4 L12 dimers bind in a sequential fashion. Binds GTP-bound translation factors.

Forms part of the ribosomal stalk which helps the ribosome interact with GTP-bound translation factors. Is thus essential for accurate translation. This chain is Large ribosomal subunit protein bL12, found in Pasteurella multocida (strain Pm70).